A 306-amino-acid polypeptide reads, in one-letter code: UDP-N-acetylenolpyruvoylglucosamine reductase (306 aa).

Residues 34 to 198 enclose the FAD-binding PCMH-type domain; it reads VGGPADLLIT…LEVTFKLHNS (165 aa). The active site involves Arg177. Ser227 functions as the Proton donor in the catalytic mechanism. Residue Glu297 is part of the active site.

It belongs to the MurB family. FAD is required as a cofactor.

The protein resides in the cytoplasm. The enzyme catalyses UDP-N-acetyl-alpha-D-muramate + NADP(+) = UDP-N-acetyl-3-O-(1-carboxyvinyl)-alpha-D-glucosamine + NADPH + H(+). Its pathway is cell wall biogenesis; peptidoglycan biosynthesis. Its function is as follows. Cell wall formation. This Clostridium botulinum (strain Okra / Type B1) protein is UDP-N-acetylenolpyruvoylglucosamine reductase.